The sequence spans 274 residues: Nitrogenase iron protein (274 aa).

ATP is bound at residue 8–15 (GKGGIGKS). A [4Fe-4S] cluster-binding site is contributed by Cys-94. Arg-97 carries the post-translational modification ADP-ribosylarginine; by dinitrogenase reductase ADP-ribosyltransferase. Cys-131 serves as a coordination point for [4Fe-4S] cluster.

Belongs to the NifH/BchL/ChlL family. Homodimer. [4Fe-4S] cluster is required as a cofactor. The reversible ADP-ribosylation of Arg-97 inactivates the nitrogenase reductase and regulates nitrogenase activity.

It carries out the reaction N2 + 8 reduced [2Fe-2S]-[ferredoxin] + 16 ATP + 16 H2O = H2 + 8 oxidized [2Fe-2S]-[ferredoxin] + 2 NH4(+) + 16 ADP + 16 phosphate + 6 H(+). Functionally, the key enzymatic reactions in nitrogen fixation are catalyzed by the nitrogenase complex, which has 2 components: the iron protein and the molybdenum-iron protein. This Chlorobium limicola (strain DSM 245 / NBRC 103803 / 6330) protein is Nitrogenase iron protein.